Reading from the N-terminus, the 366-residue chain is Carbamoyl phosphate synthase small chain (366 aa).

The CPSase stretch occupies residues 1–168 (MYGILVLEDG…KETVVYSADD (168 aa)). 3 residues coordinate L-glutamine: serine 45, glycine 220, and glycine 222. Residues 172 to 363 (KCVLIDCGVK…VELGIKFKAE (192 aa)) enclose the Glutamine amidotransferase type-1 domain. Cysteine 247 serves as the catalytic Nucleophile. Residues leucine 248, glutamine 251, asparagine 289, glycine 291, and phenylalanine 292 each contribute to the L-glutamine site. Active-site residues include histidine 336 and glutamate 338.

The protein belongs to the CarA family. Composed of two chains; the small (or glutamine) chain promotes the hydrolysis of glutamine to ammonia, which is used by the large (or ammonia) chain to synthesize carbamoyl phosphate. Tetramer of heterodimers (alpha,beta)4.

It catalyses the reaction hydrogencarbonate + L-glutamine + 2 ATP + H2O = carbamoyl phosphate + L-glutamate + 2 ADP + phosphate + 2 H(+). The catalysed reaction is L-glutamine + H2O = L-glutamate + NH4(+). Its pathway is amino-acid biosynthesis; L-arginine biosynthesis; carbamoyl phosphate from bicarbonate: step 1/1. It functions in the pathway pyrimidine metabolism; UMP biosynthesis via de novo pathway; (S)-dihydroorotate from bicarbonate: step 1/3. Small subunit of the glutamine-dependent carbamoyl phosphate synthetase (CPSase). CPSase catalyzes the formation of carbamoyl phosphate from the ammonia moiety of glutamine, carbonate, and phosphate donated by ATP, constituting the first step of 2 biosynthetic pathways, one leading to arginine and/or urea and the other to pyrimidine nucleotides. The small subunit (glutamine amidotransferase) binds and cleaves glutamine to supply the large subunit with the substrate ammonia. The protein is Carbamoyl phosphate synthase small chain of Methanococcus maripaludis (strain C6 / ATCC BAA-1332).